The primary structure comprises 88 residues: Putative septation protein SpoVG (88 aa).

Belongs to the SpoVG family.

In terms of biological role, could be involved in septation. The sequence is that of Putative septation protein SpoVG from Caldicellulosiruptor bescii (strain ATCC BAA-1888 / DSM 6725 / KCTC 15123 / Z-1320) (Anaerocellum thermophilum).